The following is a 258-amino-acid chain: Phosphate import ATP-binding protein PstB 2 (258 aa).

Residues 12–253 (IQVRDLNFYY…PRQKQTEDYI (242 aa)) form the ABC transporter domain. 44-51 (GPSGCGKS) is an ATP binding site.

This sequence belongs to the ABC transporter superfamily. Phosphate importer (TC 3.A.1.7) family. As to quaternary structure, the complex is composed of two ATP-binding proteins (PstB), two transmembrane proteins (PstC and PstA) and a solute-binding protein (PstS).

Its subcellular location is the cell inner membrane. It carries out the reaction phosphate(out) + ATP + H2O = ADP + 2 phosphate(in) + H(+). Its function is as follows. Part of the ABC transporter complex PstSACB involved in phosphate import. Responsible for energy coupling to the transport system. The protein is Phosphate import ATP-binding protein PstB 2 of Pectobacterium atrosepticum (strain SCRI 1043 / ATCC BAA-672) (Erwinia carotovora subsp. atroseptica).